A 388-amino-acid chain; its full sequence is Coproporphyrin III ferrochelatase (388 aa).

Residues Ser-59 and Tyr-124 each contribute to the Fe-coproporphyrin III site. Residues His-186 and Glu-276 each contribute to the Fe(2+) site. Residues 349-369 (QSPQHASRAVTDAAATGRRGD) form a disordered region.

The protein belongs to the ferrochelatase family.

The protein localises to the cytoplasm. The catalysed reaction is Fe-coproporphyrin III + 2 H(+) = coproporphyrin III + Fe(2+). It functions in the pathway porphyrin-containing compound metabolism; protoheme biosynthesis. Involved in coproporphyrin-dependent heme b biosynthesis. Catalyzes the insertion of ferrous iron into coproporphyrin III to form Fe-coproporphyrin III. The chain is Coproporphyrin III ferrochelatase from Frankia alni (strain DSM 45986 / CECT 9034 / ACN14a).